The following is a 334-amino-acid chain: tRNA N6-adenosine threonylcarbamoyltransferase (334 aa).

Residues H112 and H116 each contribute to the Fe cation site. Substrate-binding positions include 135 to 139, D168, G181, D185, and N274; that span reads VVSGG. D303 contacts Fe cation.

The protein belongs to the KAE1 / TsaD family. Fe(2+) is required as a cofactor.

The protein localises to the cytoplasm. It carries out the reaction L-threonylcarbamoyladenylate + adenosine(37) in tRNA = N(6)-L-threonylcarbamoyladenosine(37) in tRNA + AMP + H(+). In terms of biological role, required for the formation of a threonylcarbamoyl group on adenosine at position 37 (t(6)A37) in tRNAs that read codons beginning with adenine. Is involved in the transfer of the threonylcarbamoyl moiety of threonylcarbamoyl-AMP (TC-AMP) to the N6 group of A37, together with TsaE and TsaB. TsaD likely plays a direct catalytic role in this reaction. This Anaeromyxobacter dehalogenans (strain 2CP-1 / ATCC BAA-258) protein is tRNA N6-adenosine threonylcarbamoyltransferase.